Here is a 151-residue protein sequence, read N- to C-terminus: 3-hydroxyacyl-[acyl-carrier-protein] dehydratase FabZ (151 aa).

His-54 is a catalytic residue.

This sequence belongs to the thioester dehydratase family. FabZ subfamily.

It localises to the cytoplasm. It carries out the reaction a (3R)-hydroxyacyl-[ACP] = a (2E)-enoyl-[ACP] + H2O. Functionally, involved in unsaturated fatty acids biosynthesis. Catalyzes the dehydration of short chain beta-hydroxyacyl-ACPs and long chain saturated and unsaturated beta-hydroxyacyl-ACPs. The sequence is that of 3-hydroxyacyl-[acyl-carrier-protein] dehydratase FabZ from Erwinia tasmaniensis (strain DSM 17950 / CFBP 7177 / CIP 109463 / NCPPB 4357 / Et1/99).